A 341-amino-acid polypeptide reads, in one-letter code: Glyceraldehyde-3-phosphate dehydrogenase, cytosolic (341 aa).

NAD(+) is bound by residues 15 to 16, aspartate 37, and arginine 84; that span reads RI. D-glyceraldehyde 3-phosphate-binding positions include 155–157, threonine 186, 215–216, and arginine 238; these read SCT and TG. Cysteine 156 (nucleophile) is an active-site residue. Asparagine 320 lines the NAD(+) pocket.

This sequence belongs to the glyceraldehyde-3-phosphate dehydrogenase family. As to quaternary structure, homotetramer.

The protein localises to the cytoplasm. The enzyme catalyses D-glyceraldehyde 3-phosphate + phosphate + NAD(+) = (2R)-3-phospho-glyceroyl phosphate + NADH + H(+). It participates in carbohydrate degradation; glycolysis; pyruvate from D-glyceraldehyde 3-phosphate: step 1/5. Its function is as follows. Key enzyme in glycolysis that catalyzes the first step of the pathway by converting D-glyceraldehyde 3-phosphate (G3P) into 3-phospho-D-glyceroyl phosphate. Essential for the maintenance of cellular ATP levels and carbohydrate metabolism. This chain is Glyceraldehyde-3-phosphate dehydrogenase, cytosolic (GAPC), found in Magnolia liliiflora (Mulan magnolia).